Here is a 416-residue protein sequence, read N- to C-terminus: Adenylosuccinate synthetase (416 aa).

Residues 13–19 and 41–43 contribute to the GTP site; these read GDEGKGK and GHT. D14 serves as the catalytic Proton acceptor. Mg(2+) is bound by residues D14 and G41. IMP contacts are provided by residues 14–17, 39–42, T126, R140, Q220, T235, and R299; these read DEGK and NAGH. Residue H42 is the Proton donor of the active site. 295 to 301 is a binding site for substrate; it reads VSTGRKR. Residues R301, 327-329, and 405-407 each bind GTP; these read KLD and STS.

Belongs to the adenylosuccinate synthetase family. In terms of assembly, homodimer. The cofactor is Mg(2+).

Its subcellular location is the cytoplasm. It catalyses the reaction IMP + L-aspartate + GTP = N(6)-(1,2-dicarboxyethyl)-AMP + GDP + phosphate + 2 H(+). Its pathway is purine metabolism; AMP biosynthesis via de novo pathway; AMP from IMP: step 1/2. Plays an important role in the de novo pathway of purine nucleotide biosynthesis. Catalyzes the first committed step in the biosynthesis of AMP from IMP. The sequence is that of Adenylosuccinate synthetase from Campylobacter jejuni subsp. jejuni serotype O:6 (strain 81116 / NCTC 11828).